The chain runs to 182 residues: Glutathione-regulated potassium-efflux system ancillary protein KefG (182 aa).

It belongs to the NAD(P)H dehydrogenase (quinone) family. KefG subfamily. Interacts with KefB.

It is found in the cell inner membrane. It catalyses the reaction a quinone + NADH + H(+) = a quinol + NAD(+). It carries out the reaction a quinone + NADPH + H(+) = a quinol + NADP(+). In terms of biological role, regulatory subunit of a potassium efflux system that confers protection against electrophiles. Required for full activity of KefB. This Yersinia pseudotuberculosis serotype O:1b (strain IP 31758) protein is Glutathione-regulated potassium-efflux system ancillary protein KefG.